We begin with the raw amino-acid sequence, 272 residues long: Merozoite surface protein 2 (272 aa).

The N-terminal stretch at 1-20 (MKVIKTLSIINFFIFVTFNI) is a signal peptide. N-linked (GlcNAc...) asparagine glycosylation is found at asparagine 22 and asparagine 36. A polymorphic region region spans residues 44–198 (AESKPSTGAG…EQTESPELQS (155 aa)). A disordered region spans residues 45 to 233 (ESKPSTGAGG…DSQKECTDGN (189 aa)). The span at 51–82 (GAGGSAGGSAGGSAGGSAGGSAGGSAGSGDGN) shows a compositional bias: gly residues. 6 tandem repeats follow at residues 53 to 56 (GGSA), 57 to 60 (GGSA), 61 to 64 (GGSA), 65 to 68 (GGSA), 69 to 72 (GGSA), and 73 to 76 (GGSA). The segment at 53 to 76 (GGSAGGSAGGSAGGSAGGSAGGSA) is 6 X 4 AA tandem repeats of G-G-S-A. Positions 83–119 (GADAEGSSSTPATTTTTKTTTTTTTTNDAEASTSTSS) are enriched in low complexity. Basic and acidic residues predominate over residues 122 to 137 (PNHKNAETNPKGKGEV). Composition is skewed to polar residues over residues 139–165 (EPNQ…NVPP) and 172–200 (KSPT…QSAP). Asparagine 149 carries an N-linked (GlcNAc...) asparagine glycan. The N-linked (GlcNAc...) asparagine glycan is linked to asparagine 221. A disulfide bridge links cysteine 229 with cysteine 237. 2 N-linked (GlcNAc...) asparagine glycosylation sites follow: asparagine 245 and asparagine 246. Asparagine 246 carries GPI-anchor amidated asparagine lipidation. Residues 247–272 (SSNIASINKFVVLISATLVLSFAIFI) constitute a propeptide, removed in mature form.

The protein resides in the cell membrane. In terms of biological role, may play a role in the merozoite attachment to the erythrocyte. This is Merozoite surface protein 2 from Plasmodium falciparum (isolate 3D7).